Reading from the N-terminus, the 418-residue chain is Nucleoside permease NupC (418 aa).

A run of 9 helical transmembrane segments spans residues 2 to 22 (IFSS…AWVF), 34 to 54 (IVSA…VPLG), 93 to 113 (IGGF…ASLI), 174 to 194 (IFAV…AGYA), 198 to 218 (IPLP…LLFA), 264 to 284 (LLAF…VGGF), 292 to 314 (LGLI…WSQA), 354 to 374 (AIIT…MLIG), and 395 to 415 (VLVG…FIGL).

This sequence belongs to the concentrative nucleoside transporter (CNT) (TC 2.A.41) family.

It is found in the cell inner membrane. Its function is as follows. Involved in purine nucleosides uptake. Could also be involved in uptake of nucleobases. The sequence is that of Nucleoside permease NupC from Helicobacter pylori (strain ATCC 700392 / 26695) (Campylobacter pylori).